The primary structure comprises 547 residues: MENAKDFIGETIKENGLLTIEDDGSSSSDEEATLKRRLAGPSVLKSGQENVNQKKINEIIYEASKGSKFFEAEQKRDRELRLRIEKVQVEVEKYQSKLRFDKAFQREWTIRQESVDTTVEDFRAKRDLTQIIVHVDCDAFYASIEELKNPKLKSLPMAVGKSVLCTANYVARKFGVRSAMPEFIARKICPDLVVIPLNLSEYAIKSKEIQNVLAQYDSNLCPASIDEFYMNLTSHLRLQELAFTVENITMVVEKIRKQVHEETGVTVSCGIAANKLLAKIASNKRKPNNQFFIPFDEIGISKFMNDLPVREVSGIGRVLEQQLLGLEIKTCGDIQRNLVILSYIFLPKSFQNLLRCSYGFGTTILDEYGESKRKTIGSEATFSSNLSSPSIIEYKLRLLVQNVSENLQKRGLVTNSIAIKYKTSEFQVHTKQKSIGQFIHSESDLLKPALQLLRQSYPMTIRLLGVRATKLVSKSRCLAMQLKFQSQNTVPCPVCQKNIENELGILNQHVDLCLNVETVKSLINTDHTANPTIKKRKSNTLDTYFLE.

The interval 18 to 39 (LTIEDDGSSSSDEEATLKRRLA) is disordered. Positions 20 to 31 (IEDDGSSSSDEE) are enriched in acidic residues. In terms of domain architecture, UmuC spans 132-316 (IVHVDCDAFY…LPVREVSGIG (185 aa)). Mg(2+) is bound by residues Asp136 and Asp226. A UBZ4-type zinc finger spans residues 489–518 (TVPCPVCQKNIENELGILNQHVDLCLNVET). 4 residues coordinate Zn(2+): Cys492, Cys495, His509, and Cys513.

As to quaternary structure, interacts with hus1 and rad17.

It localises to the cytoplasm. The protein resides in the nucleus. The enzyme catalyses DNA(n) + a 2'-deoxyribonucleoside 5'-triphosphate = DNA(n+1) + diphosphate. Its function is as follows. DNA polymerase specifically involved in DNA repair. Plays an important role in translesion synthesis, where the normal high-fidelity DNA polymerases cannot proceed and DNA synthesis stalls. Has a role in meiosis. The polypeptide is DNA polymerase kappa (mug40) (Schizosaccharomyces pombe (strain 972 / ATCC 24843) (Fission yeast)).